The sequence spans 97 residues: Biogenesis of lysosome-related organelles complex 1 subunit SNN1 (97 aa).

Positions 45–97 (VVRLKQIRNLLKEEQEYYNEEEGLGVERERLEELELRVEKLTQKYKKLLADCV) form a coiled coil.

The protein belongs to the SNAPIN family. In terms of assembly, component of the biogenesis of lysosome-related organelles complex-1 (BLOC-1).

Its subcellular location is the endosome. Its function is as follows. Component of the biogenesis of lysosome-related organelles complex-1 (BLOC-1), a complex involved in endosomal cargo sorting. The chain is Biogenesis of lysosome-related organelles complex 1 subunit SNN1 (SNN1) from Lachancea thermotolerans (strain ATCC 56472 / CBS 6340 / NRRL Y-8284) (Yeast).